The following is a 203-amino-acid chain: Dephospho-CoA kinase (203 aa).

A DPCK domain is found at 4–201; that stretch reads IIGLTGGIGS…RKYLMLARKH (198 aa). 12–17 is a binding site for ATP; it reads GSGKTR.

It belongs to the CoaE family.

It localises to the cytoplasm. The enzyme catalyses 3'-dephospho-CoA + ATP = ADP + CoA + H(+). It functions in the pathway cofactor biosynthesis; coenzyme A biosynthesis; CoA from (R)-pantothenate: step 5/5. In terms of biological role, catalyzes the phosphorylation of the 3'-hydroxyl group of dephosphocoenzyme A to form coenzyme A. In Nitrosomonas europaea (strain ATCC 19718 / CIP 103999 / KCTC 2705 / NBRC 14298), this protein is Dephospho-CoA kinase.